Consider the following 139-residue polypeptide: Ribonuclease VapC39 (139 aa).

The PINc domain occupies 4–133 (LLDVNVLIAL…DAALADSASA (130 aa)). Residues aspartate 6 and aspartate 106 each contribute to the Mg(2+) site.

Belongs to the PINc/VapC protein family. The cofactor is Mg(2+).

Its function is as follows. Toxic component of a type II toxin-antitoxin (TA) system. An RNase. Its toxic effect is neutralized by coexpression with cognate antitoxin VapB39. This Mycobacterium tuberculosis (strain CDC 1551 / Oshkosh) protein is Ribonuclease VapC39.